Consider the following 115-residue polypeptide: Cholecystokinin (115 aa).

The signal sequence occupies residues 1-20; sequence MNSGVCLCVLMAVLAAGALT. Residues 21-44 constitute a propeptide that is removed on maturation; the sequence is QPVPPADPAGSGLQRAEEAPRRQL. The tract at residues 23–52 is disordered; the sequence is VPPADPAGSGLQRAEEAPRRQLRVSQRTDG. Residue S31 is glycosylated (O-linked (Xyl...) (chondroitin sulfate) serine). Y97 carries the post-translational modification Sulfotyrosine. F103 carries the post-translational modification Phenylalanine amide. Residues 107–115 constitute a propeptide that is removed on maturation; sequence SAEEYEYPS. A sulfotyrosine mark is found at Y111 and Y113.

Belongs to the gastrin/cholecystokinin family. In terms of assembly, binds to CCK-A receptors in the pancreas and CCK-B receptors in the brain. The precursor is cleaved by proteases to produce a number of active cholecystokinins. In terms of processing, the precursor is cleaved by ACE, which removes the Gly-Arg-Arg peptide at the C-terminus, leading to mature hormone. Detected in cerebrospinal fluid and urine (at protein level).

Its subcellular location is the secreted. This peptide hormone induces gall bladder contraction and the release of pancreatic enzymes in the gut. Its function in the brain is not clear. Binding to CCK-A receptors stimulates amylase release from the pancreas, binding to CCK-B receptors stimulates gastric acid secretion. This is Cholecystokinin (CCK) from Homo sapiens (Human).